Here is a 134-residue protein sequence, read N- to C-terminus: MLRRSPTLLRVSPFSLYMKDLAKNGTLQNDRNPAKTASRLYRKLSEPEKMALQKRAARVSYPALDAYNRFQKEYAHRFLHLSNKKRQREVSKLWAELKKNGTVKVPKAPKAAKSASSKVKTAAKTAKKTTAARK.

The propeptide occupies 1–10 (MLRRSPTLLR). Over residues 106–124 (PKAPKAAKSASSKVKTAAK) the composition is skewed to low complexity. Residues 106-134 (PKAPKAAKSASSKVKTAAKTAKKTTAARK) form a disordered region. Residues 125-134 (TAKKTTAARK) are compositionally biased toward basic residues.

Belongs to the KAP family. Associates with the kinetoplast DNA network.

Its subcellular location is the mitochondrion matrix. The protein localises to the kinetoplast. In terms of biological role, histone H1-like DNA-binding protein involved in the organization and segregation of kinetoplast DNA (kDNA). The mitochondrial DNA of kinetoplastid protozoa consists of about 5,000 minicircles and 20 to 30 maxicircles. These circular DNAs are held together by catenation into a highly organized compact disk structure referred to as a kinetoplast DNA (kDNA) network. Binds preferentially to a specific fragment of minicircle DNA and is able to compact kDNA networks through DNA charge neutralization and condensation. This Crithidia fasciculata protein is kinetoplast-associated protein 3 (KAP3).